The sequence spans 2368 residues: Voltage-dependent P/Q-type calcium channel subunit alpha-1A (2368 aa).

Over 1 to 100 the chain is Cytoplasmic; that stretch reads MARFGDEMPG…KYAKKITEWP (100 aa). One copy of the I repeat lies at 65-365; that stretch reads NPIPVRQNCL…LVLGVLSGEF (301 aa). Residues 101-119 form a helical membrane-spanning segment; the sequence is PFEYMILATIIANCIVLAL. The Extracellular segment spans residues 120–138; the sequence is EQHLPDDDKTPMSERLDDT. Residues 139–156 traverse the membrane as a helical segment; it reads EPYFIGIFCFEAGIKIVA. Residues 157–168 lie on the Cytoplasmic side of the membrane; the sequence is LGFAFHKGSYLR. The helical transmembrane segment at 169–184 threads the bilayer; the sequence is NGWNVMDFVVVLTGIL. Residues 185–192 are Extracellular-facing; sequence ATVGTEFD. A helical transmembrane segment spans residues 193–211; the sequence is LRTLRAVRVLRPLKLVSGI. Residues 212-230 lie on the Cytoplasmic side of the membrane; the sequence is PSLQVVLKSIMKAMIPLLQ. The chain crosses the membrane as a helical span at residues 231 to 250; the sequence is IGLLLFFAILIFAIIGLEFY. Topologically, residues 251–337 are extracellular; sequence MGKFHTTCFE…NSNDASGNTW (87 aa). A glycan (N-linked (GlcNAc...) asparagine) is linked at Asn285. Glu320 lines the Ca(2+) pocket. Residues 338–362 traverse the membrane as a helical segment; that stretch reads NWLYFIPLIIIGSFFMLNLVLGVLS. The Cytoplasmic portion of the chain corresponds to 363–489; the sequence is GEFAKERERV…FYIRRMVKTQ (127 aa). Positions 385-402 are binding to the beta subunit; that stretch reads QQIERELNGYMEWISKAE. Thr411 carries the phosphothreonine modification. Phosphoserine is present on residues Ser450 and Ser453. An II repeat occupies 475–719; sequence ERRMRFYIRR…VFLAIAVDNL (245 aa). The chain crosses the membrane as a helical span at residues 490–509; sequence AFYWTVLSLVALNTLCVAIV. Over 510–523 the chain is Extracellular; the sequence is HYNQPEWLSDFLYY. A helical membrane pass occupies residues 524–543; the sequence is AEFIFLGLFMSEMFIKMYGL. Over 544–551 the chain is Cytoplasmic; that stretch reads GTRPYFHS. A helical membrane pass occupies residues 552–570; that stretch reads SFNCFDCGVIIGSIFEVIW. Residues 571–580 lie on the Extracellular side of the membrane; it reads AVIKPGTSFG. The helical transmembrane segment at 581–599 threads the bilayer; the sequence is ISVLRALRLLRIFKVTKYW. The Cytoplasmic segment spans residues 600-618; sequence ASLRNLVVSLLNSMKSIIS. Residues 619-638 form a helical membrane-spanning segment; that stretch reads LLFLLFLFIVVFALLGMQLF. Residues 639 to 691 lie on the Extracellular side of the membrane; the sequence is GGQFNFDEGTPPTNFDTFPAAIMTVFQILTGEDWNEVMYDGIKSQGGVQGGMV. Position 670 (Glu670) interacts with Ca(2+). The chain crosses the membrane as a helical span at residues 692–716; it reads FSIYFIVLTLFGNYTLLNVFLAIAV. Residues 717–1190 lie on the Cytoplasmic side of the membrane; that stretch reads DNLANAQELT…TNPLRRLCHY (474 aa). Ser752 and Ser755 each carry phosphoserine. The tract at residues 762–781 is disordered; that stretch reads AVKEQQKNQKPTKSVWEQRT. Residues 769-779 are compositionally biased toward polar residues; sequence NQKPTKSVWEQ. Ser792 carries the post-translational modification Phosphoserine. Disordered regions lie at residues 823–1117 and 1137–1170; these read PLVV…RKPE and VNKNANPDPLPKKEEEKKEEEEADPGEDGPKPMP. Basic and acidic residues-rich tracts occupy residues 850–862, 871–924, and 932–958; these read RPRESARDPDARR, APGR…EGEP, and RPGDEPDDRPERRPRPRDATRPARAAD. Residues Ser1038, Ser1042, and Ser1051 each carry the phosphoserine modification. Residues 1056 to 1073 are compositionally biased toward polar residues; that stretch reads GNSTNPGPALATNPQNAA. A compositionally biased stretch (low complexity) spans 1074–1083; it reads SRRTPNNPGN. The span at 1094 to 1111 shows a compositional bias: polar residues; it reads ENSLIVTNPSSTQPNSAK. Over residues 1153–1163 the composition is skewed to acidic residues; that stretch reads KKEEEEADPGE. One copy of the III repeat lies at 1182–1465; the sequence is NPLRRLCHYI…IFVALIIITF (284 aa). A helical membrane pass occupies residues 1191–1214; that stretch reads ILNLRYFEMCILMVIAMSSIALAA. The Extracellular portion of the chain corresponds to 1215 to 1231; that stretch reads EDPVQPNAPRNNVLRYF. A helical transmembrane segment spans residues 1232-1251; that stretch reads DYVFTGVFTFEMVIKMIDLG. The Cytoplasmic portion of the chain corresponds to 1252 to 1258; sequence LVLHQGA. A helical membrane pass occupies residues 1259-1282; the sequence is YFRDLWNILDFIVVSGALVAFAFT. The Extracellular segment spans residues 1283 to 1293; sequence GNSKGKDINTI. A helical transmembrane segment spans residues 1294 to 1311; it reads KSLRVLRVLRPLKTIKRL. The Cytoplasmic portion of the chain corresponds to 1312-1330; sequence PKLKAVFDCVVNSLKNVFN. A helical membrane pass occupies residues 1331–1350; the sequence is ILIVYMLFMFIFAVVAVQLF. At 1351–1437 the chain is on the extracellular side; sequence KGKFFHCTDE…QGPSPGYRME (87 aa). Glu1411 contacts Ca(2+). Residues 1438–1462 traverse the membrane as a helical segment; that stretch reads MSIFYVVYFVVFPFFFVNIFVALII. Topologically, residues 1463–1518 are cytoplasmic; that stretch reads ITFQEQGDKMMEEYSLEKNERACIDFAISAKPLTRHMPQNKQSFQYRMWQFVVSPP. An IV repeat occupies 1502–1765; the sequence is NKQSFQYRMW…LFVAVIMDNF (264 aa). A helical membrane pass occupies residues 1519 to 1537; it reads FEYTIMAMIALNTIVLMMK. The Extracellular portion of the chain corresponds to 1538–1551; the sequence is FYGASVAYENALRV. A helical membrane pass occupies residues 1552 to 1573; the sequence is FNIVFTSLFSLECVLKVMAFGI. At 1574–1580 the chain is on the cytoplasmic side; the sequence is LNYFRDA. Residues 1581 to 1600 form a helical membrane-spanning segment; it reads WNIFDFVTVLGSITDILVTE. Topologically, residues 1601-1607 are extracellular; the sequence is FGNNFIN. A glycan (N-linked (GlcNAc...) asparagine) is linked at Asn1607. The helical transmembrane segment at 1608 to 1626 threads the bilayer; it reads LSFLRLFRAARLIKLLRQG. Over 1627-1645 the chain is Cytoplasmic; it reads YTIRILLWTFVQSFKALPY. A helical transmembrane segment spans residues 1646 to 1665; it reads VCLLIAMLFFIYAIIGMQVF. The Extracellular portion of the chain corresponds to 1666-1737; sequence GNIGIDGEDE…ILTADCGNEF (72 aa). A helical transmembrane segment spans residues 1738 to 1763; sequence AYFYFVSFIFLCSFLMLNLFVAVIMD. Residues 1764 to 2368 lie on the Cytoplasmic side of the membrane; that stretch reads NFEYLTRDSS…AYSESEDDWC (605 aa). Position 1935 is a phosphothreonine (Thr1935). The tract at residues 1940–2368 is disordered; it reads QRMEPPSPTQ…AYSESEDDWC (429 aa). Composition is skewed to polar residues over residues 1948 to 1963 and 1981 to 1997; these read TQEGGPSQNALPSTQL and SWVTQRAQEMFQKTGTW. A phosphoserine mark is found at Ser1998, Ser2016, Ser2028, Ser2030, Ser2071, and Ser2091. Residues 2008 to 2017 show a composition bias toward polar residues; the sequence is PNSQPNSQSV. Residues 2018 to 2034 are compositionally biased toward basic and acidic residues; sequence EMREMGTDGYSDSEHYL. Over residues 2063-2073 the composition is skewed to polar residues; that stretch reads DLSTISDTSPM. Basic and acidic residues-rich tracts occupy residues 2085-2102 and 2143-2153; these read RRLDDYSLERVPPEENQR and PSKDRDQDRGR. Over residues 2154 to 2172 the composition is skewed to basic residues; sequence PKDRKHRPHHHHHHHHHHP. The span at 2173–2209 shows a compositional bias: basic and acidic residues; the sequence is PAPDRDRYAQERPDTGRARAREQRWSRSPSEGREHTT. Residues 2213 to 2231 are compositionally biased toward low complexity; the sequence is GSSSVSGSPAPSTSGTSTP. Residues 2289 to 2305 are compositionally biased toward basic and acidic residues; that stretch reads EGPRPRGADYTEPDSPR.

The protein belongs to the calcium channel alpha-1 subunit (TC 1.A.1.11) family. CACNA1A subfamily. In terms of assembly, voltage-dependent calcium channels are multisubunit complexes, consisting of alpha-1, alpha-2, beta and delta subunits in a 1:1:1:1 ratio. The channel activity is directed by the pore-forming and voltage-sensitive alpha-1 subunit. In many cases, this subunit is sufficient to generate voltage-sensitive calcium channel activity. The auxiliary subunits beta and alpha-2/delta linked by a disulfide bridge regulate the channel activity. Interacts with CABP1. Interacts with the spider omega-agatoxin-IVA (AC P30288). Interacts with TSPOAP1. Brain specific; mainly found in the cerebellum, olfactory bulb, cerebral cortex, hippocampus, and inferior colliculus. In the hippocampus, expression occurs in pyramidal and granule neurons, as well as in interneurons. Purkinje cells contain predominantly P-type VSCC, the Q-type being a prominent calcium current in cerebellar granule cells.

The protein localises to the cell membrane. It catalyses the reaction Ca(2+)(in) = Ca(2+)(out). Its function is as follows. Voltage-sensitive calcium channels (VSCC) mediate the entry of calcium ions into excitable cells and are also involved in a variety of calcium-dependent processes, including muscle contraction, hormone or neurotransmitter release, gene expression, cell motility, cell division and cell death. The isoform alpha-1A gives rise to P and/or Q-type calcium currents. P/Q-type calcium channels belong to the 'high-voltage activated' (HVA) group and are specifically blocked by the spider omega-agatoxin-IVA (AC P54282). They are however insensitive to dihydropyridines (DHP). The chain is Voltage-dependent P/Q-type calcium channel subunit alpha-1A from Mus musculus (Mouse).